The primary structure comprises 293 residues: ESX-3 secretion-associated protein EspG3 (293 aa).

It belongs to the EspG family.

It localises to the cytoplasm. The protein is ESX-3 secretion-associated protein EspG3 of Mycolicibacterium smegmatis (strain ATCC 700084 / mc(2)155) (Mycobacterium smegmatis).